The sequence spans 200 residues: Prophage tail fiber assembly protein homolog TfaE (200 aa).

This sequence belongs to the tfa family.

This Escherichia coli (strain K12) protein is Prophage tail fiber assembly protein homolog TfaE (tfaE).